We begin with the raw amino-acid sequence, 466 residues long: ATP-dependent protease ATPase subunit HslU (466 aa).

ATP is bound by residues Ile18, 60-65, Asp279, Glu344, and Arg416; that span reads GVGKTE.

Belongs to the ClpX chaperone family. HslU subfamily. In terms of assembly, a double ring-shaped homohexamer of HslV is capped on each side by a ring-shaped HslU homohexamer. The assembly of the HslU/HslV complex is dependent on binding of ATP.

The protein resides in the cytoplasm. ATPase subunit of a proteasome-like degradation complex; this subunit has chaperone activity. The binding of ATP and its subsequent hydrolysis by HslU are essential for unfolding of protein substrates subsequently hydrolyzed by HslV. HslU recognizes the N-terminal part of its protein substrates and unfolds these before they are guided to HslV for hydrolysis. In Syntrophomonas wolfei subsp. wolfei (strain DSM 2245B / Goettingen), this protein is ATP-dependent protease ATPase subunit HslU.